Reading from the N-terminus, the 323-residue chain is MSNYDALYRQLAAMGQERWAEQLQATLPDKLALESTAKMAGWQSAMQSLPEISPSRIELLDTVTIGSSDDLGQVDREELMAHLQAFHPWRKGPYNFFGIEIDTEWRSDWKWERLLPHIQPLAGRRVIDVGCGNGYHGWRMRGAGAEFVLGIEPFLLSVQQFQVMQRYLCDPQHHVIPIGIEEVPPNLACFDSVFSMGVLYHRRSPLDHLFELKGCLRPGGELILETLIVEGDRETIFMPPGRYAKMRNVWFIPSIAAMTLWLERCGFTDIACVDTNRTSREEQRSTEWMRFESLADFLDPDDAQKTIEGHPAPLRAIFTATKP.

Carboxy-S-adenosyl-L-methionine-binding positions include lysine 91, tryptophan 105, lysine 110, glycine 130, 180–181, methionine 196, tyrosine 200, and arginine 315; that span reads IE.

The protein belongs to the class I-like SAM-binding methyltransferase superfamily. CmoB family. As to quaternary structure, homotetramer.

It catalyses the reaction carboxy-S-adenosyl-L-methionine + 5-hydroxyuridine(34) in tRNA = 5-carboxymethoxyuridine(34) in tRNA + S-adenosyl-L-homocysteine + H(+). Catalyzes carboxymethyl transfer from carboxy-S-adenosyl-L-methionine (Cx-SAM) to 5-hydroxyuridine (ho5U) to form 5-carboxymethoxyuridine (cmo5U) at position 34 in tRNAs. This chain is tRNA U34 carboxymethyltransferase, found in Citrifermentans bemidjiense (strain ATCC BAA-1014 / DSM 16622 / JCM 12645 / Bem) (Geobacter bemidjiensis).